The following is a 353-amino-acid chain: tRNA N6-adenosine threonylcarbamoyltransferase (353 aa).

H111 and H115 together coordinate Fe cation. Substrate-binding positions include 148–152, D181, G194, and N286; that span reads LVSGG. A Fe cation-binding site is contributed by D314.

Belongs to the KAE1 / TsaD family. It depends on Fe(2+) as a cofactor.

It localises to the cytoplasm. It catalyses the reaction L-threonylcarbamoyladenylate + adenosine(37) in tRNA = N(6)-L-threonylcarbamoyladenosine(37) in tRNA + AMP + H(+). Its function is as follows. Required for the formation of a threonylcarbamoyl group on adenosine at position 37 (t(6)A37) in tRNAs that read codons beginning with adenine. Is involved in the transfer of the threonylcarbamoyl moiety of threonylcarbamoyl-AMP (TC-AMP) to the N6 group of A37, together with TsaE and TsaB. TsaD likely plays a direct catalytic role in this reaction. The protein is tRNA N6-adenosine threonylcarbamoyltransferase of Blochmanniella floridana.